A 297-amino-acid chain; its full sequence is N-acetylneuraminate lyase (297 aa).

2 residues coordinate aceneuramate: serine 47 and threonine 48. The active-site Proton donor is tyrosine 137. Residue lysine 165 is the Schiff-base intermediate with substrate of the active site. The aceneuramate site is built by threonine 167, glycine 189, aspartate 191, glutamate 192, and serine 208.

It belongs to the DapA family. NanA subfamily. As to quaternary structure, homotetramer.

The protein resides in the cytoplasm. It catalyses the reaction aceneuramate = aldehydo-N-acetyl-D-mannosamine + pyruvate. It participates in amino-sugar metabolism; N-acetylneuraminate degradation; D-fructose 6-phosphate from N-acetylneuraminate: step 1/5. Functionally, catalyzes the reversible aldol cleavage of N-acetylneuraminic acid (sialic acid; Neu5Ac) to form pyruvate and N-acetylmannosamine (ManNAc) via a Schiff base intermediate. This Salmonella typhimurium (strain LT2 / SGSC1412 / ATCC 700720) protein is N-acetylneuraminate lyase.